A 277-amino-acid chain; its full sequence is Putative thiosulfate sulfurtransferase (277 aa).

Rhodanese domains follow at residues K18–A125 and A154–E274. K67 participates in a covalent cross-link: Isoglutamyl lysine isopeptide (Lys-Gln) (interchain with Q-Cter in protein Pup). C233 functions as the Cysteine persulfide intermediate in the catalytic mechanism. Position 238 (R238) interacts with substrate.

It catalyses the reaction thiosulfate + hydrogen cyanide = thiocyanate + sulfite + 2 H(+). In terms of biological role, may be a sulfotransferase involved in the formation of thiosulfate. The polypeptide is Putative thiosulfate sulfurtransferase (Mycolicibacterium smegmatis (strain ATCC 700084 / mc(2)155) (Mycobacterium smegmatis)).